Reading from the N-terminus, the 283-residue chain is 1D-myo-inositol 2-acetamido-2-deoxy-alpha-D-glucopyranoside deacetylase (283 aa).

Zn(2+) contacts are provided by His-15, Asp-18, and His-150.

The protein belongs to the MshB deacetylase family. Requires Zn(2+) as cofactor.

It carries out the reaction 1D-myo-inositol 2-acetamido-2-deoxy-alpha-D-glucopyranoside + H2O = 1D-myo-inositol 2-amino-2-deoxy-alpha-D-glucopyranoside + acetate. Catalyzes the deacetylation of 1D-myo-inositol 2-acetamido-2-deoxy-alpha-D-glucopyranoside (GlcNAc-Ins) in the mycothiol biosynthesis pathway. This chain is 1D-myo-inositol 2-acetamido-2-deoxy-alpha-D-glucopyranoside deacetylase, found in Actinosynnema mirum (strain ATCC 29888 / DSM 43827 / JCM 3225 / NBRC 14064 / NCIMB 13271 / NRRL B-12336 / IMRU 3971 / 101).